The sequence spans 148 residues: Small ribosomal subunit protein uS7c (148 aa).

This sequence belongs to the universal ribosomal protein uS7 family. Part of the 30S ribosomal subunit.

The protein resides in the plastid. The protein localises to the chloroplast. Functionally, one of the primary rRNA binding proteins, it binds directly to 16S rRNA where it nucleates assembly of the head domain of the 30S subunit. In Cyanidioschyzon merolae (strain NIES-3377 / 10D) (Unicellular red alga), this protein is Small ribosomal subunit protein uS7c (rps7).